Consider the following 1400-residue polypeptide: Clustered mitochondria protein homolog (1400 aa).

Disordered regions lie at residues 1 to 39 (MVSK…KEAS), 56 to 78 (GHDQ…QAED), and 212 to 243 (GDTG…KERP). Basic and acidic residues predominate over residues 56–69 (GHDQAEEADSKQDG). Positions 380-622 (RAEDAYTSRL…RTFPPDLNFL (243 aa)) constitute a Clu domain. The tract at residues 684-741 (AALQDSNAAGAGSENKPLALESCDGTPDSPTSSESTLTPEDSEATTVSENSSAENQEA) is disordered. Low complexity predominate over residues 707–722 (DGTPDSPTSSESTLTP). Residues 727 to 741 (ATTVSENSSAENQEA) show a composition bias toward polar residues. TPR repeat units follow at residues 1088 to 1121 (AFHF…FNNV), 1130 to 1163 (CACL…SERV), 1172 to 1205 (IQEY…MLVV), and 1214 to 1247 (ALLD…NTKY). Positions 1377–1388 (QDSGKIQEQQGS) are enriched in polar residues. The disordered stretch occupies residues 1377–1400 (QDSGKIQEQQGSHLELDDKLPVDD). The span at 1390-1400 (LELDDKLPVDD) shows a compositional bias: basic and acidic residues.

Belongs to the CLU family.

It localises to the cytoplasm. Its function is as follows. mRNA-binding protein involved in proper cytoplasmic distribution of mitochondria. The protein is Clustered mitochondria protein homolog of Danio rerio (Zebrafish).